The primary structure comprises 211 residues: Histone H1t (211 aa).

N-acetylalanine is present on A1. Residues 1-16 (AETAPAAPADSVPASV) are compositionally biased toward low complexity. Residues 1 to 42 (AETAPAAPADSVPASVEKPPAKKRGKKPVGLTGTSRKAPSAS) are disordered. A compositionally biased stretch (polar residues) spans 32–42 (TGTSRKAPSAS). Residues 39–112 (PSASVSKLIT…GASGSFKLSK (74 aa)) form the H15 domain. R57 is modified (citrulline). Positions 101–211 (GTGASGSFKL…TNPRKATNRK (111 aa)) are disordered. The segment covering 121-135 (GKVKKPAAAKTKKLV) has biased composition (basic residues). Position 142 is a phosphoserine (S142). Over residues 147–156 (KANKRAKKSR) the composition is skewed to basic residues. Phosphothreonine is present on T158. S166 and S181 each carry phosphoserine. The span at 176 to 189 (KQQRKSPAKARAAK) shows a compositional bias: basic residues.

This sequence belongs to the histone H1/H5 family. Phosphorylated in early spermatids. Post-translationally, citrullination at Arg-57 (H1R54ci) by PADI4 takes place within the DNA-binding site of H1 and results in its displacement from chromatin and global chromatin decondensation, thereby promoting pluripotency and stem cell maintenance. In terms of tissue distribution, testis-specific.

The protein localises to the nucleus. The protein resides in the chromosome. Testis-specific histone H1 that forms less compacted chromatin compared to other H1 histone subtypes. Formation of more relaxed chromatin may be required to promote chromatin architecture required for proper chromosome regulation during meiosis, such as homologous recombination. Histones H1 act as linkers that bind to nucleosomes and compact polynucleosomes into a higher-order chromatin configuration. This is Histone H1t from Sus scrofa (Pig).